The following is a 568-amino-acid chain: Urease subunit alpha (568 aa).

In terms of domain architecture, Urease spans 130 to 568 (GGIDTHIHFI…LPMAQRYFLF (439 aa)). Ni(2+)-binding residues include His135, His137, and Lys218. Lys218 is modified (N6-carboxylysine). Substrate is bound at residue His220. The Ni(2+) site is built by His247 and His273. The Proton donor role is filled by His321. Asp361 is a binding site for Ni(2+).

Belongs to the metallo-dependent hydrolases superfamily. Urease alpha subunit family. In terms of assembly, heterotrimer of UreA (gamma), UreB (beta) and UreC (alpha) subunits. Three heterotrimers associate to form the active enzyme. Ni cation is required as a cofactor. Post-translationally, carboxylation allows a single lysine to coordinate two nickel ions.

It is found in the cytoplasm. It catalyses the reaction urea + 2 H2O + H(+) = hydrogencarbonate + 2 NH4(+). It participates in nitrogen metabolism; urea degradation; CO(2) and NH(3) from urea (urease route): step 1/1. This chain is Urease subunit alpha, found in Burkholderia pseudomallei (strain 668).